A 142-amino-acid polypeptide reads, in one-letter code: Large ribosomal subunit protein uL13 (142 aa).

It belongs to the universal ribosomal protein uL13 family. Part of the 50S ribosomal subunit.

Functionally, this protein is one of the early assembly proteins of the 50S ribosomal subunit, although it is not seen to bind rRNA by itself. It is important during the early stages of 50S assembly. The protein is Large ribosomal subunit protein uL13 of Pseudomonas syringae pv. tomato (strain ATCC BAA-871 / DC3000).